Reading from the N-terminus, the 397-residue chain is Acetate kinase (397 aa).

Asn-8 is a Mg(2+) binding site. Lys-15 provides a ligand contact to ATP. Arg-89 contributes to the substrate binding site. The active-site Proton donor/acceptor is the Asp-146. ATP is bound by residues 206–210, 281–283, and 329–333; these read HLGNG, DLR, and GVGEN. Mg(2+) is bound at residue Glu-382.

This sequence belongs to the acetokinase family. As to quaternary structure, homodimer. Mg(2+) serves as cofactor. It depends on Mn(2+) as a cofactor.

The protein localises to the cytoplasm. It catalyses the reaction acetate + ATP = acetyl phosphate + ADP. Its pathway is metabolic intermediate biosynthesis; acetyl-CoA biosynthesis; acetyl-CoA from acetate: step 1/2. Its function is as follows. Catalyzes the formation of acetyl phosphate from acetate and ATP. Can also catalyze the reverse reaction. This chain is Acetate kinase, found in Bacillus cereus (strain ATCC 10987 / NRS 248).